Reading from the N-terminus, the 217-residue chain is Imidazole glycerol phosphate synthase subunit HisH (217 aa).

The Glutamine amidotransferase type-1 domain occupies 3–217 (SVAVIDYGMG…FLRWEPWSSR (215 aa)). Catalysis depends on cysteine 82, which acts as the Nucleophile. Active-site residues include histidine 193 and glutamate 195.

Heterodimer of HisH and HisF.

It is found in the cytoplasm. It carries out the reaction 5-[(5-phospho-1-deoxy-D-ribulos-1-ylimino)methylamino]-1-(5-phospho-beta-D-ribosyl)imidazole-4-carboxamide + L-glutamine = D-erythro-1-(imidazol-4-yl)glycerol 3-phosphate + 5-amino-1-(5-phospho-beta-D-ribosyl)imidazole-4-carboxamide + L-glutamate + H(+). The catalysed reaction is L-glutamine + H2O = L-glutamate + NH4(+). It participates in amino-acid biosynthesis; L-histidine biosynthesis; L-histidine from 5-phospho-alpha-D-ribose 1-diphosphate: step 5/9. In terms of biological role, IGPS catalyzes the conversion of PRFAR and glutamine to IGP, AICAR and glutamate. The HisH subunit catalyzes the hydrolysis of glutamine to glutamate and ammonia as part of the synthesis of IGP and AICAR. The resulting ammonia molecule is channeled to the active site of HisF. This Methylococcus capsulatus (strain ATCC 33009 / NCIMB 11132 / Bath) protein is Imidazole glycerol phosphate synthase subunit HisH.